Reading from the N-terminus, the 562-residue chain is Protein FAM83D-B (562 aa).

Positions 424 to 472 (ITTQTTETSQCTTQTPAPTSSVARLSNSSNSSSSSFSSASTTSTGSNCS) are disordered. Residues 425-472 (TTQTTETSQCTTQTPAPTSSVARLSNSSNSSSSSFSSASTTSTGSNCS) are compositionally biased toward low complexity.

The protein belongs to the FAM83 family.

It localises to the cytoplasm. The protein localises to the cytoskeleton. It is found in the spindle. Its subcellular location is the spindle pole. In terms of biological role, may regulate cell proliferation, growth, migration and epithelial to mesenchymal transition. May also be important for proper chromosome congression and alignment during mitosis. The chain is Protein FAM83D-B from Xenopus laevis (African clawed frog).